Here is a 331-residue protein sequence, read N- to C-terminus: Hydroxyacylglutathione hydrolase 1, mitochondrial (331 aa).

The transit peptide at 1–76 (MPVISKASST…HFCSISNMPS (76 aa)) directs the protein to the mitochondrion. Zn(2+) is bound by residues H131 and H133. Positions 135 and 136 each coordinate Fe cation. Positions 189 and 208 each coordinate Zn(2+). Residue D208 coordinates Fe cation. Position 246 to 248 (246 to 248 (REN)) interacts with substrate.

It belongs to the metallo-beta-lactamase superfamily. Glyoxalase II family. Fe(2+) is required as a cofactor. It depends on Fe(3+) as a cofactor. Requires Zn(2+) as cofactor. In terms of tissue distribution, mainly expressed in roots, flowers and flower buds. Also detected in leaves.

It localises to the mitochondrion. The catalysed reaction is an S-(2-hydroxyacyl)glutathione + H2O = a 2-hydroxy carboxylate + glutathione + H(+). It participates in secondary metabolite metabolism; methylglyoxal degradation; (R)-lactate from methylglyoxal: step 2/2. Thiolesterase that catalyzes the hydrolysis of S-D-lactoyl-glutathione to form glutathione and D-lactic acid. The protein is Hydroxyacylglutathione hydrolase 1, mitochondrial (GLX2-1) of Arabidopsis thaliana (Mouse-ear cress).